A 393-amino-acid chain; its full sequence is Probable acetyl-CoA acyltransferase (393 aa).

The active-site Acyl-thioester intermediate is the C88. Active-site proton acceptor residues include H349 and C378.

It belongs to the thiolase-like superfamily. Thiolase family.

It localises to the cytoplasm. The catalysed reaction is 2 acetyl-CoA = acetoacetyl-CoA + CoA. The chain is Probable acetyl-CoA acyltransferase from Staphylococcus aureus (strain NCTC 8325 / PS 47).